Reading from the N-terminus, the 286-residue chain is Bifunctional protein FolD (286 aa).

NADP(+) contacts are provided by residues 165 to 167 (GRS), Ser-190, and Val-231.

This sequence belongs to the tetrahydrofolate dehydrogenase/cyclohydrolase family. Homodimer.

The catalysed reaction is (6R)-5,10-methylene-5,6,7,8-tetrahydrofolate + NADP(+) = (6R)-5,10-methenyltetrahydrofolate + NADPH. It carries out the reaction (6R)-5,10-methenyltetrahydrofolate + H2O = (6R)-10-formyltetrahydrofolate + H(+). Its pathway is one-carbon metabolism; tetrahydrofolate interconversion. Functionally, catalyzes the oxidation of 5,10-methylenetetrahydrofolate to 5,10-methenyltetrahydrofolate and then the hydrolysis of 5,10-methenyltetrahydrofolate to 10-formyltetrahydrofolate. The sequence is that of Bifunctional protein FolD from Bacillus cereus (strain G9842).